The sequence spans 153 residues: 6,7-dimethyl-8-ribityllumazine synthase 1 (153 aa).

5-amino-6-(D-ribitylamino)uracil is bound by residues Phe-16, 47-49 (ALE), and 76-78 (MVI). 81-82 (ET) lines the (2S)-2-hydroxy-3-oxobutyl phosphate pocket. His-84 acts as the Proton donor in catalysis. Residue Asn-109 participates in 5-amino-6-(D-ribitylamino)uracil binding. A (2S)-2-hydroxy-3-oxobutyl phosphate-binding site is contributed by Arg-123.

The protein belongs to the DMRL synthase family.

The catalysed reaction is (2S)-2-hydroxy-3-oxobutyl phosphate + 5-amino-6-(D-ribitylamino)uracil = 6,7-dimethyl-8-(1-D-ribityl)lumazine + phosphate + 2 H2O + H(+). The protein operates within cofactor biosynthesis; riboflavin biosynthesis; riboflavin from 2-hydroxy-3-oxobutyl phosphate and 5-amino-6-(D-ribitylamino)uracil: step 1/2. Functionally, catalyzes the formation of 6,7-dimethyl-8-ribityllumazine by condensation of 5-amino-6-(D-ribitylamino)uracil with 3,4-dihydroxy-2-butanone 4-phosphate. This is the penultimate step in the biosynthesis of riboflavin. The polypeptide is 6,7-dimethyl-8-ribityllumazine synthase 1 (Rhizobium meliloti (strain 1021) (Ensifer meliloti)).